The sequence spans 183 residues: SsrA-binding protein (183 aa).

Residues 1 to 27 are disordered; the sequence is MAKKATLVDHGAAKGKKKAQSKVSKKN. Positions 13 to 27 are enriched in basic residues; it reads AKGKKKAQSKVSKKN.

Belongs to the SmpB family.

It localises to the cytoplasm. Required for rescue of stalled ribosomes mediated by trans-translation. Binds to transfer-messenger RNA (tmRNA), required for stable association of tmRNA with ribosomes. tmRNA and SmpB together mimic tRNA shape, replacing the anticodon stem-loop with SmpB. tmRNA is encoded by the ssrA gene; the 2 termini fold to resemble tRNA(Ala) and it encodes a 'tag peptide', a short internal open reading frame. During trans-translation Ala-aminoacylated tmRNA acts like a tRNA, entering the A-site of stalled ribosomes, displacing the stalled mRNA. The ribosome then switches to translate the ORF on the tmRNA; the nascent peptide is terminated with the 'tag peptide' encoded by the tmRNA and targeted for degradation. The ribosome is freed to recommence translation, which seems to be the essential function of trans-translation. This chain is SsrA-binding protein, found in Corynebacterium kroppenstedtii (strain DSM 44385 / JCM 11950 / CIP 105744 / CCUG 35717).